Consider the following 485-residue polypeptide: CUGBP Elav-like family member 5 (485 aa).

Positions 1-11 (MARLTESEARR) are enriched in basic and acidic residues. The disordered stretch occupies residues 1-40 (MARLTESEARRQQQQLLQPRPSPVGSSGPEPPGGQPDGMK). Over residues 12–28 (QQQQLLQPRPSPVGSSG) the composition is skewed to low complexity. RRM domains follow at residues 45-126 (IKLF…PADS), 134-214 (RKLF…FADT), and 400-478 (CNLF…LKRP).

Belongs to the CELF/BRUNOL family. In terms of tissue distribution, expressed in brain.

It is found in the nucleus. The protein resides in the cytoplasm. In terms of biological role, RNA-binding protein implicated in the regulation of pre-mRNA alternative splicing. Mediates exon inclusion and/or exclusion in pre-mRNA that are subject to tissue-specific and developmentally regulated alternative splicing. Specifically activates exon 5 inclusion of cardiac isoforms of TNNT2 during heart remodeling at the juvenile to adult transition. Binds to muscle-specific splicing enhancer (MSE) intronic sites flanking the alternative exon 5 of TNNT2 pre-mRNA. The protein is CUGBP Elav-like family member 5 (CELF5) of Homo sapiens (Human).